Reading from the N-terminus, the 338-residue chain is ATPase GET3 (338 aa).

Residue 33–40 (KGGVGKTT) coordinates ATP. Residue Asp62 is part of the active site. The ATP site is built by Glu242 and Asn269. Zn(2+) is bound by residues Cys280 and Cys283.

Belongs to the arsA ATPase family. As to quaternary structure, homodimer.

Its subcellular location is the cytoplasm. The protein resides in the endoplasmic reticulum. Its function is as follows. ATPase required for the post-translational delivery of tail-anchored (TA) proteins to the endoplasmic reticulum. Recognizes and selectively binds the transmembrane domain of TA proteins in the cytosol. This complex then targets to the endoplasmic reticulum by membrane-bound receptors, where the tail-anchored protein is released for insertion. This process is regulated by ATP binding and hydrolysis. ATP binding drives the homodimer towards the closed dimer state, facilitating recognition of newly synthesized TA membrane proteins. ATP hydrolysis is required for insertion. Subsequently, the homodimer reverts towards the open dimer state, lowering its affinity for the membrane-bound receptor, and returning it to the cytosol to initiate a new round of targeting. The sequence is that of ATPase GET3 from Uncinocarpus reesii (strain UAMH 1704).